A 279-amino-acid chain; its full sequence is Shikimate dehydrogenase (NADP(+)) (279 aa).

Shikimate is bound by residues 20-22 and T67; that span reads SRS. K71 acts as the Proton acceptor in catalysis. D83 is an NADP(+) binding site. Positions 92 and 108 each coordinate shikimate. NADP(+)-binding positions include 134-138 and L223; that span reads GAGGA. Residue Y225 coordinates shikimate. G246 contributes to the NADP(+) binding site.

It belongs to the shikimate dehydrogenase family. In terms of assembly, homodimer.

The enzyme catalyses shikimate + NADP(+) = 3-dehydroshikimate + NADPH + H(+). It participates in metabolic intermediate biosynthesis; chorismate biosynthesis; chorismate from D-erythrose 4-phosphate and phosphoenolpyruvate: step 4/7. Involved in the biosynthesis of the chorismate, which leads to the biosynthesis of aromatic amino acids. Catalyzes the reversible NADPH linked reduction of 3-dehydroshikimate (DHSA) to yield shikimate (SA). This chain is Shikimate dehydrogenase (NADP(+)), found in Cereibacter sphaeroides (strain ATCC 17029 / ATH 2.4.9) (Rhodobacter sphaeroides).